Consider the following 589-residue polypeptide: Splicing factor U2af large subunit B (589 aa).

The tract at residues 1–195 (MMSYEGNGDG…KRRSGFDMAP (195 aa)) is disordered. The span at 14–27 (STENHNENYISLES) shows a compositional bias: polar residues. Composition is skewed to basic and acidic residues over residues 29-100 (PFHE…DRQR) and 109-145 (RDRS…DREV). Composition is skewed to basic residues over residues 146–156 (RHRRRSRSRSR) and 164–188 (RSEH…SKRR). RRM domains lie at 255-338 (RRVY…RPTD), 375-453 (DRIF…RAIQ), and 494-580 (QVVT…YPED).

Belongs to the splicing factor SR family. As to quaternary structure, component of the spliceosome. Interacts with SF1 in the nucleus.

The protein resides in the nucleus. It is found in the nucleus speckle. In terms of biological role, necessary for the splicing of pre-mRNA. The polypeptide is Splicing factor U2af large subunit B (Arabidopsis thaliana (Mouse-ear cress)).